The following is a 578-amino-acid chain: Proline--tRNA ligase (578 aa).

The protein belongs to the class-II aminoacyl-tRNA synthetase family. ProS type 1 subfamily. As to quaternary structure, homodimer.

The protein localises to the cytoplasm. It carries out the reaction tRNA(Pro) + L-proline + ATP = L-prolyl-tRNA(Pro) + AMP + diphosphate. In terms of biological role, catalyzes the attachment of proline to tRNA(Pro) in a two-step reaction: proline is first activated by ATP to form Pro-AMP and then transferred to the acceptor end of tRNA(Pro). As ProRS can inadvertently accommodate and process non-cognate amino acids such as alanine and cysteine, to avoid such errors it has two additional distinct editing activities against alanine. One activity is designated as 'pretransfer' editing and involves the tRNA(Pro)-independent hydrolysis of activated Ala-AMP. The other activity is designated 'posttransfer' editing and involves deacylation of mischarged Ala-tRNA(Pro). The misacylated Cys-tRNA(Pro) is not edited by ProRS. The polypeptide is Proline--tRNA ligase (Burkholderia orbicola (strain AU 1054)).